The sequence spans 151 residues: UPF0735 ACT domain-containing protein SAUSA300_1599 (151 aa).

The 76-residue stretch at 74–149 (TLILYVTDIV…YVSKVELISM (76 aa)) folds into the ACT domain.

Belongs to the UPF0735 family.

This is UPF0735 ACT domain-containing protein SAUSA300_1599 from Staphylococcus aureus (strain USA300).